The following is a 239-amino-acid chain: Uridylate kinase (239 aa).

K10–G13 is an ATP binding site. The involved in allosteric activation by GTP stretch occupies residues G18–G23. G52 is a binding site for UMP. Residues G53 and R57 each contribute to the ATP site. UMP contacts are provided by residues D73 and T134 to T141. T161, Y167, and D170 together coordinate ATP.

Belongs to the UMP kinase family. In terms of assembly, homohexamer.

It is found in the cytoplasm. It catalyses the reaction UMP + ATP = UDP + ADP. It participates in pyrimidine metabolism; CTP biosynthesis via de novo pathway; UDP from UMP (UMPK route): step 1/1. Allosterically activated by GTP. Inhibited by UTP. Catalyzes the reversible phosphorylation of UMP to UDP. This chain is Uridylate kinase, found in Campylobacter jejuni subsp. jejuni serotype O:6 (strain 81116 / NCTC 11828).